Here is a 736-residue protein sequence, read N- to C-terminus: Protein DSF2 (736 aa).

Polar residues predominate over residues 1–10; the sequence is MNQNLKNTSW. 4 disordered regions span residues 1-46, 178-208, 229-410, and 440-461; these read MNQN…DSQF, SGMKPQMNRNEKDYKYPNLENGNRSTNSPNP, ISDN…SGEN, and FKTASTPQSSTDKKKNSKARPN. The span at 14 to 24 shows a compositional bias: basic and acidic residues; it reads IGSDDQERKAN. Polar residues-rich tracts occupy residues 25–46 and 197–208; these read SSEVSQSPPPNNSFESSMDSQF and ENGNRSTNSPNP. The segment covering 238 to 256 has biased composition (low complexity); that stretch reads NNANSKNNRTTSNNINTST. Over residues 264–284 the composition is skewed to polar residues; that stretch reads KQSCPNEFTTTQKSNCLYRNG. Low complexity-rich tracts occupy residues 285–294, 303–318, and 335–350; these read SSTSTNTSFS, KTQSSFESESSSFSKL, and SNSSTSTITKTNTMTN. Positions 374 to 385 are enriched in basic residues; that stretch reads KLFKSPRTRAKN. Residues 392-410 show a composition bias toward polar residues; that stretch reads EGSSPIRSATNSLDFSGEN.

This Saccharomyces cerevisiae (strain ATCC 204508 / S288c) (Baker's yeast) protein is Protein DSF2 (DSF2).